The chain runs to 250 residues: Flavin-dependent thymidylate synthase (250 aa).

Residues 7-233 (LRVQLIAKTD…PAVFADFEVT (227 aa)) enclose the ThyX domain. Residues S71, 95–97 (RHR), and Q103 contribute to the FAD site. Residues 92 to 95 (ELIR), 103 to 107 (QLSQR), and R172 contribute to the dUMP site. The ThyX motif signature appears at 95-105 (RHRHFSYSQLS). FAD is bound by residues 188–190 (NYR) and H194. R199 serves as a coordination point for dUMP. Residue R199 is the Involved in ionization of N3 of dUMP, leading to its activation of the active site.

It belongs to the thymidylate synthase ThyX family. As to quaternary structure, homotetramer. It depends on FAD as a cofactor.

The catalysed reaction is dUMP + (6R)-5,10-methylene-5,6,7,8-tetrahydrofolate + NADPH + H(+) = dTMP + (6S)-5,6,7,8-tetrahydrofolate + NADP(+). It participates in pyrimidine metabolism; dTTP biosynthesis. Functionally, catalyzes the reductive methylation of 2'-deoxyuridine-5'-monophosphate (dUMP) to 2'-deoxythymidine-5'-monophosphate (dTMP) while utilizing 5,10-methylenetetrahydrofolate (mTHF) as the methyl donor, and NADPH and FADH(2) as the reductant. The sequence is that of Flavin-dependent thymidylate synthase from Mycobacterium bovis (strain ATCC BAA-935 / AF2122/97).